Here is a 33-residue protein sequence, read N- to C-terminus: Photosystem II reaction center protein Psb30 (33 aa).

A helical membrane pass occupies residues Gln8–Phe28.

It belongs to the Psb30/Ycf12 family. As to quaternary structure, PSII is composed of 1 copy each of membrane proteins PsbA, PsbB, PsbC, PsbD, PsbE, PsbF, PsbH, PsbI, PsbJ, PsbK, PsbL, PsbM, PsbT, PsbX, PsbY, PsbZ, Psb30/Ycf12, peripheral proteins of the oxygen-evolving complex and a large number of cofactors. It forms dimeric complexes.

The protein resides in the plastid. It localises to the chloroplast thylakoid membrane. In terms of biological role, a core subunit of photosystem II (PSII), probably helps stabilize the reaction center. The polypeptide is Photosystem II reaction center protein Psb30 (Staurastrum punctulatum (Green alga)).